We begin with the raw amino-acid sequence, 506 residues long: Maturase K (506 aa).

It belongs to the intron maturase 2 family. MatK subfamily.

It localises to the plastid. It is found in the chloroplast. Usually encoded in the trnK tRNA gene intron. Probably assists in splicing its own and other chloroplast group II introns. In Austrosteenisia blackii (Blood vine), this protein is Maturase K.